Here is a 191-residue protein sequence, read N- to C-terminus: Peptidyl-tRNA hydrolase (191 aa).

Tyr14 is a tRNA binding site. His19 serves as the catalytic Proton acceptor. The tRNA site is built by Tyr64, Asn66, and Asn112.

This sequence belongs to the PTH family. Monomer.

The protein localises to the cytoplasm. The catalysed reaction is an N-acyl-L-alpha-aminoacyl-tRNA + H2O = an N-acyl-L-amino acid + a tRNA + H(+). Its function is as follows. Hydrolyzes ribosome-free peptidyl-tRNAs (with 1 or more amino acids incorporated), which drop off the ribosome during protein synthesis, or as a result of ribosome stalling. Functionally, catalyzes the release of premature peptidyl moieties from peptidyl-tRNA molecules trapped in stalled 50S ribosomal subunits, and thus maintains levels of free tRNAs and 50S ribosomes. The sequence is that of Peptidyl-tRNA hydrolase from Clostridium botulinum (strain Alaska E43 / Type E3).